Here is a 701-residue protein sequence, read N- to C-terminus: Elongation factor G (701 aa).

The region spanning 8–286 (ERIRNIGIIA…AIVHYLPSPV (279 aa)) is the tr-type G domain. GTP-binding positions include 17-24 (AHIDAGKT), 85-89 (DTPGH), and 139-142 (NKMD).

This sequence belongs to the TRAFAC class translation factor GTPase superfamily. Classic translation factor GTPase family. EF-G/EF-2 subfamily.

The protein resides in the cytoplasm. Catalyzes the GTP-dependent ribosomal translocation step during translation elongation. During this step, the ribosome changes from the pre-translocational (PRE) to the post-translocational (POST) state as the newly formed A-site-bound peptidyl-tRNA and P-site-bound deacylated tRNA move to the P and E sites, respectively. Catalyzes the coordinated movement of the two tRNA molecules, the mRNA and conformational changes in the ribosome. The chain is Elongation factor G from Roseiflexus sp. (strain RS-1).